A 254-amino-acid polypeptide reads, in one-letter code: MEIDLNADLGEGCGSDEALLDLVTSANIACGWHAGGAQAMRDCVRWAVEKGVSIGAHPSFHDPENFGRKEMDLPASEIYAGVLYQLGALSAIAQAEGGRIAHVKPHGALYNQAAREPEIADAVVSAIHDFDPSLAVFGLAKSGFVDAAQQAGLVAVEEVFADRGYRADGSLVPRSQPGALVDDENEMLARTLEMVRGQRVRAVTGEWVPLNAQTVCLHGDGPHALAFAKRIRDALEAAGIDVHAPGALHAGERA.

This sequence belongs to the LamB/PxpA family. As to quaternary structure, forms a complex composed of PxpA, PxpB and PxpC.

It catalyses the reaction 5-oxo-L-proline + ATP + 2 H2O = L-glutamate + ADP + phosphate + H(+). In terms of biological role, catalyzes the cleavage of 5-oxoproline to form L-glutamate coupled to the hydrolysis of ATP to ADP and inorganic phosphate. This Burkholderia mallei (strain NCTC 10247) protein is 5-oxoprolinase subunit A.